An 82-amino-acid polypeptide reads, in one-letter code: Small ribosomal subunit protein bS16 (82 aa).

Belongs to the bacterial ribosomal protein bS16 family.

The protein is Small ribosomal subunit protein bS16 of Francisella philomiragia subsp. philomiragia (strain ATCC 25017 / CCUG 19701 / FSC 153 / O#319-036).